The primary structure comprises 364 residues: UDP-N-acetylglucosamine--N-acetylmuramyl-(pentapeptide) pyrophosphoryl-undecaprenol N-acetylglucosamine transferase (364 aa).

UDP-N-acetyl-alpha-D-glucosamine-binding positions include 10-12 (TGG), Asn124, Arg166, Ser196, Ile252, and Gln297.

The protein belongs to the glycosyltransferase 28 family. MurG subfamily.

Its subcellular location is the cell membrane. The catalysed reaction is di-trans,octa-cis-undecaprenyl diphospho-N-acetyl-alpha-D-muramoyl-L-alanyl-D-glutamyl-meso-2,6-diaminopimeloyl-D-alanyl-D-alanine + UDP-N-acetyl-alpha-D-glucosamine = di-trans,octa-cis-undecaprenyl diphospho-[N-acetyl-alpha-D-glucosaminyl-(1-&gt;4)]-N-acetyl-alpha-D-muramoyl-L-alanyl-D-glutamyl-meso-2,6-diaminopimeloyl-D-alanyl-D-alanine + UDP + H(+). The protein operates within cell wall biogenesis; peptidoglycan biosynthesis. Cell wall formation. Catalyzes the transfer of a GlcNAc subunit on undecaprenyl-pyrophosphoryl-MurNAc-pentapeptide (lipid intermediate I) to form undecaprenyl-pyrophosphoryl-MurNAc-(pentapeptide)GlcNAc (lipid intermediate II). The chain is UDP-N-acetylglucosamine--N-acetylmuramyl-(pentapeptide) pyrophosphoryl-undecaprenol N-acetylglucosamine transferase from Ruminiclostridium cellulolyticum (strain ATCC 35319 / DSM 5812 / JCM 6584 / H10) (Clostridium cellulolyticum).